A 184-amino-acid chain; its full sequence is Mitochondrial translation release factor in rescue (184 aa).

The transit peptide at 1–98 (MSSRSTWALL…HVPSGIVVKC (98 aa)) directs the protein to the mitochondrion. The GGQ domain stretch occupies residues 60–124 (ESELEEQFVK…LQEKVDVFYN (65 aa)). Positions 74-76 (GGQ) match the GGQ motif. Gln-76 carries the N5-methylglutamine modification. A coiled-coil region spans residues 130 to 178 (VHKEKLEAERRKRERKKRAKETLEKKKLLKELREASQNITEKKADADGI). Positions 132-184 (KEKLEAERRKRERKKRAKETLEKKKLLKELREASQNITEKKADADGIPRGFQE) are disordered. Residues 149-184 (KETLEKKKLLKELREASQNITEKKADADGIPRGFQE) are compositionally biased toward basic and acidic residues.

The protein belongs to the prokaryotic/mitochondrial release factor family. Interacts (via C-terminus) with MTRES1 (via S4 domain). Associates with mitoribosomal S39 large subunit, peptidyl tRNA and nascent chain. Methylation of glutamine in the GGQ triplet by HEMK1.

It is found in the mitochondrion. Its function is as follows. Part of a mitoribosome-associated quality control pathway that prevents aberrant translation by responding to interruptions during elongation. As heterodimer with MTRES1, ejects the unfinished nascent chain and peptidyl transfer RNA (tRNA), respectively, from stalled ribosomes. Recruitment of mitoribosome biogenesis factors to these quality control intermediates suggests additional roles for MTRES1 and MTRF during mitoribosome rescue. The polypeptide is Mitochondrial translation release factor in rescue (Mus musculus (Mouse)).